Consider the following 508-residue polypeptide: Nucleolar complex protein 4 homolog (508 aa).

3 helical membrane-spanning segments follow: residues 288-308, 341-361, and 367-387; these read VAYG…FILI, HLAD…AAFI, and LALT…CNLF.

It belongs to the CBF/MAK21 family.

It localises to the nucleus membrane. Its subcellular location is the nucleus. The protein localises to the nucleolus. The protein is Nucleolar complex protein 4 homolog (NOC4L) of Gallus gallus (Chicken).